The chain runs to 214 residues: Non-structural protein NP-1 (214 aa).

Disordered stretches follow at residues 1-85 and 192-214; these read MSSE…TRTN and ESEE…NASN. Over residues 33–43 the composition is skewed to basic residues; sequence SRSRSPIRRHG. The span at 44–55 shows a compositional bias: basic and acidic residues; sequence EKNLEYAHHNNQ. The span at 56–71 shows a compositional bias: polar residues; sequence DNRQSSYTASKTSDQA. The span at 192-201 shows a compositional bias: acidic residues; it reads ESEEVTDEEM.

It belongs to the Bocaparvovirus Non-structural protein NP-1 family.

The protein localises to the host nucleus. Functionally, required for the expression of the capsid proteins. Performs the splicing and internal polyadenylation of the viral capsid-encoding mRNA precursor, which allows its maturation and expression. Transactivates the viral promoter. The protein is Non-structural protein NP-1 (NP1) of Human bocavirus 4 (HBoV4).